Reading from the N-terminus, the 152-residue chain is Probable histone H2A.3 (152 aa).

2 disordered regions span residues Met1–Val25 and Lys129–Ala152. A compositionally biased stretch (basic residues) spans Thr7 to Val25. A compositionally biased stretch (basic and acidic residues) spans Lys129–Thr142. Positions Ser148–Lys151 match the SPKK motif motif.

Belongs to the histone H2A family. In terms of assembly, the nucleosome is a histone octamer containing two molecules each of H2A, H2B, H3 and H4 assembled in one H3-H4 heterotetramer and two H2A-H2B heterodimers. The octamer wraps approximately 147 bp of DNA.

The protein resides in the nucleus. The protein localises to the chromosome. Core component of nucleosome. Nucleosomes wrap and compact DNA into chromatin, limiting DNA accessibility to the cellular machineries which require DNA as a template. Histones thereby play a central role in transcription regulation, DNA repair, DNA replication and chromosomal stability. DNA accessibility is regulated via a complex set of post-translational modifications of histones, also called histone code, and nucleosome remodeling. In Medicago truncatula (Barrel medic), this protein is Probable histone H2A.3.